The sequence spans 771 residues: Probable dipeptidyl peptidase 4 (771 aa).

A signal peptide spans 1 to 16 (MKYSKLLLLLVSVVQA). N-linked (GlcNAc...) asparagine glycosylation is found at N37, N80, N114, N173, N222, N470, and N495. Active-site charge relay system residues include S618, D695, and H730.

This sequence belongs to the peptidase S9B family.

Its subcellular location is the secreted. The enzyme catalyses Release of an N-terminal dipeptide, Xaa-Yaa-|-Zaa-, from a polypeptide, preferentially when Yaa is Pro, provided Zaa is neither Pro nor hydroxyproline.. Extracellular dipeptidyl-peptidase which removes N-terminal dipeptides sequentially from polypeptides having unsubstituted N-termini provided that the penultimate residue is proline. The sequence is that of Probable dipeptidyl peptidase 4 (dpp4) from Aspergillus flavus (strain ATCC 200026 / FGSC A1120 / IAM 13836 / NRRL 3357 / JCM 12722 / SRRC 167).